The primary structure comprises 333 residues: D-threonate 4-phosphate dehydrogenase (333 aa).

Positions 140 and 141 each coordinate substrate. A divalent metal cation-binding residues include histidine 170, histidine 214, and histidine 270. Positions 278, 287, and 296 each coordinate substrate.

The protein belongs to the PdxA family. PdxA2 subfamily. As to quaternary structure, homodimer. It depends on a divalent metal cation as a cofactor.

The enzyme catalyses 4-O-phospho-D-threonate + NAD(+) = dihydroxyacetone phosphate + CO2 + NADH. Catalyzes the NAD-dependent oxidation and subsequent decarboxylation of D-threonate 4-phosphate to produce dihydroxyacetone phosphate (DHAP). Can also use 4-hydroxy-L-threonine 4-phosphate as substrate. The chain is D-threonate 4-phosphate dehydrogenase from Cupriavidus necator (strain ATCC 17699 / DSM 428 / KCTC 22496 / NCIMB 10442 / H16 / Stanier 337) (Ralstonia eutropha).